The following is a 134-amino-acid chain: ATP synthase epsilon chain (134 aa).

Belongs to the ATPase epsilon chain family. F-type ATPases have 2 components, CF(1) - the catalytic core - and CF(0) - the membrane proton channel. CF(1) has five subunits: alpha(3), beta(3), gamma(1), delta(1), epsilon(1). CF(0) has three main subunits: a, b and c.

Its subcellular location is the cellular thylakoid membrane. Its function is as follows. Produces ATP from ADP in the presence of a proton gradient across the membrane. In Prochlorococcus marinus (strain MIT 9515), this protein is ATP synthase epsilon chain.